Reading from the N-terminus, the 624-residue chain is Sulfite reductase [ferredoxin] (624 aa).

Residues 52–137 (YQQDNRDNRV…ENLGSTISAC (86 aa)) constitute a cross-link (3'-(S-cysteinyl)-tyrosine (Tyr-Cys)). [4Fe-4S] cluster is bound by residues Cys446, Cys452, Cys491, and Cys495. Cys495 is a siroheme binding site.

It belongs to the nitrite and sulfite reductase 4Fe-4S domain family. In terms of assembly, monomer. It depends on siroheme as a cofactor. [4Fe-4S] cluster serves as cofactor.

It catalyses the reaction hydrogen sulfide + 6 oxidized [2Fe-2S]-[ferredoxin] + 3 H2O = sulfite + 6 reduced [2Fe-2S]-[ferredoxin] + 7 H(+). In terms of biological role, catalyzes the reduction of sulfite to sulfide, a step in the biosynthesis of sulfur-containing amino acids and cofactors. The chain is Sulfite reductase [ferredoxin] (sir) from Synechococcus elongatus (strain ATCC 33912 / PCC 7942 / FACHB-805) (Anacystis nidulans R2).